Reading from the N-terminus, the 401-residue chain is 8-amino-7-oxononanoate synthase (401 aa).

Arg-24 lines the substrate pocket. 111 to 112 (GF) is a pyridoxal 5'-phosphate binding site. Substrate is bound at residue His-137. The pyridoxal 5'-phosphate site is built by Ser-183, His-211, and Thr-240. The residue at position 243 (Lys-243) is an N6-(pyridoxal phosphate)lysine. Residue Thr-357 participates in substrate binding.

It belongs to the class-II pyridoxal-phosphate-dependent aminotransferase family. BioF subfamily. As to quaternary structure, homodimer. Pyridoxal 5'-phosphate is required as a cofactor.

It catalyses the reaction 6-carboxyhexanoyl-[ACP] + L-alanine + H(+) = (8S)-8-amino-7-oxononanoate + holo-[ACP] + CO2. It participates in cofactor biosynthesis; biotin biosynthesis. In terms of biological role, catalyzes the decarboxylative condensation of pimeloyl-[acyl-carrier protein] and L-alanine to produce 8-amino-7-oxononanoate (AON), [acyl-carrier protein], and carbon dioxide. In Xylella fastidiosa (strain M23), this protein is 8-amino-7-oxononanoate synthase.